Here is a 65-residue protein sequence, read N- to C-terminus: MPKMKTKSGAAKRFKVRASGGIKRSQAFKRHILTKKTTKSKRQLRGMTGVHAADEKLIRAMLPYA.

This sequence belongs to the bacterial ribosomal protein bL35 family.

The chain is Large ribosomal subunit protein bL35 from Aromatoleum aromaticum (strain DSM 19018 / LMG 30748 / EbN1) (Azoarcus sp. (strain EbN1)).